Reading from the N-terminus, the 155-residue chain is S-ribosylhomocysteine lyase (155 aa).

Fe cation-binding residues include histidine 54, histidine 58, and cysteine 122.

This sequence belongs to the LuxS family. As to quaternary structure, homodimer. Requires Fe cation as cofactor.

The enzyme catalyses S-(5-deoxy-D-ribos-5-yl)-L-homocysteine = (S)-4,5-dihydroxypentane-2,3-dione + L-homocysteine. Involved in the synthesis of autoinducer 2 (AI-2) which is secreted by bacteria and is used to communicate both the cell density and the metabolic potential of the environment. The regulation of gene expression in response to changes in cell density is called quorum sensing. Catalyzes the transformation of S-ribosylhomocysteine (RHC) to homocysteine (HC) and 4,5-dihydroxy-2,3-pentadione (DPD). This chain is S-ribosylhomocysteine lyase, found in Deinococcus geothermalis (strain DSM 11300 / CIP 105573 / AG-3a).